Reading from the N-terminus, the 200-residue chain is Dephospho-CoA kinase (200 aa).

The region spanning 2-200 (LIAVVGKAGV…CHHGHYQTPK (199 aa)) is the DPCK domain. Residue 10 to 15 (GVGKTT) participates in ATP binding.

It belongs to the CoaE family.

It is found in the cytoplasm. The enzyme catalyses 3'-dephospho-CoA + ATP = ADP + CoA + H(+). It participates in cofactor biosynthesis; coenzyme A biosynthesis; CoA from (R)-pantothenate: step 5/5. Catalyzes the phosphorylation of the 3'-hydroxyl group of dephosphocoenzyme A to form coenzyme A. The protein is Dephospho-CoA kinase of Mycoplasma pneumoniae (strain ATCC 29342 / M129 / Subtype 1) (Mycoplasmoides pneumoniae).